A 157-amino-acid polypeptide reads, in one-letter code: Probable succinate transporter subunit YjjB (157 aa).

4 consecutive transmembrane segments (helical) span residues 8 to 28 (FALA…AMVF), 50 to 70 (MILM…SMLV), 87 to 107 (VFTV…TAMI), and 129 to 149 (FLTA…PGLW).

It belongs to the ThrE exporter (TC 2.A.79) family. As to quaternary structure, the transporter is composed of YjjB and YjjP.

It is found in the cell inner membrane. Functionally, involved in succinate export with YjjP. Both proteins are required for export. The polypeptide is Probable succinate transporter subunit YjjB (Escherichia coli (strain SE11)).